A 581-amino-acid polypeptide reads, in one-letter code: Multidrug resistance-like ATP-binding protein MdlA (581 aa).

Residues 18-303 (YLGSIILLII…LAWMFNIVER (286 aa)) form the ABC transmembrane type-1 domain. Helical transmembrane passes span 23–43 (ILLIIIAFLQLLPPKIIGILI), 53–73 (GFEILPWISIILLIAIIVYIL), 127–149 (VVFAAGEGVLTLVDSSVMGISVL), 153–175 (ITQISWLLTIISLIPMPIMAILI), 247–267 (VIYLSVAFSNLLAITAGGWLV), and 280–300 (FIMYLGLMIWPMLALAWMFNI). The 235-residue stretch at 337–571 (INIDMFFYPK…KNWYKSMYDH (235 aa)) folds into the ABC transporter domain. 369–376 (GPTGAGKS) lines the ATP pocket.

It belongs to the ABC transporter superfamily. Drug exporter-2 (TC 3.A.1.117) family.

It is found in the cell membrane. It catalyses the reaction ATP + H2O + xenobioticSide 1 = ADP + phosphate + xenobioticSide 2.. This chain is Multidrug resistance-like ATP-binding protein MdlA (mdlA), found in Buchnera aphidicola subsp. Schizaphis graminum (strain Sg).